A 1537-amino-acid polypeptide reads, in one-letter code: Dicer-like protein 1 (1537 aa).

Residues 38–68 (SDPAESSVDVQDEHSSDDSDNENEVFPKQND) form a disordered region. Residues 133–314 (LFERAKTQNT…EAATRLETFL (182 aa)) form the Helicase ATP-binding domain. 146 to 153 (LDTGSGKT) is a binding site for ATP. Residues 259–262 (DEAH) carry the DEAH box motif. Positions 459–618 (ELSKHFNDTT…EILPEDRILH (160 aa)) constitute a Helicase C-terminal domain. The region spanning 651–741 (AIAILARYAS…NSIYHRRLPA (91 aa)) is the Dicer dsRNA-binding fold domain. The region spanning 891-1019 (DTVSFVHNND…ICAEPLRISA (129 aa)) is the PAZ domain. RNase III domains follow at residues 1043–1202 (IALE…LSGG) and 1253–1405 (ARHV…VDSK). Glutamate 1294, aspartate 1391, and glutamate 1394 together coordinate Mg(2+). Residues 1439–1507 (TFLHNKLTNE…SEKALAVLDG (69 aa)) form the DRBM domain. Residues cysteine 1451, histidine 1478, cysteine 1519, and cysteine 1521 each coordinate Zn(2+).

This sequence belongs to the helicase family. Dicer subfamily. Mg(2+) is required as a cofactor. Requires Mn(2+) as cofactor.

Its function is as follows. Dicer-like endonuclease involved in cleaving double-stranded RNA in the RNA interference (RNAi) pathway. Produces 21 to 25 bp dsRNAs (siRNAs) which target the selective destruction of homologous RNAs leading to sequence-specific suppression of gene expression, called post-transcriptional gene silencing (PTGS). Part of a broad host defense response against viral infection and transposons. The polypeptide is Dicer-like protein 1 (dcl1) (Aspergillus fumigatus (strain ATCC MYA-4609 / CBS 101355 / FGSC A1100 / Af293) (Neosartorya fumigata)).